Reading from the N-terminus, the 572-residue chain is Oxygen-dependent choline dehydrogenase (572 aa).

Residue 9 to 38 coordinates FAD; that stretch reads DYVIIGGGSAGSVLGARLSEDKDKNVLVLE. Residue H477 is the Proton acceptor of the active site.

This sequence belongs to the GMC oxidoreductase family. Requires FAD as cofactor.

The catalysed reaction is choline + A = betaine aldehyde + AH2. The enzyme catalyses betaine aldehyde + NAD(+) + H2O = glycine betaine + NADH + 2 H(+). It participates in amine and polyamine biosynthesis; betaine biosynthesis via choline pathway; betaine aldehyde from choline (cytochrome c reductase route): step 1/1. In terms of biological role, involved in the biosynthesis of the osmoprotectant glycine betaine. Catalyzes the oxidation of choline to betaine aldehyde and betaine aldehyde to glycine betaine at the same rate. The chain is Oxygen-dependent choline dehydrogenase from Staphylococcus epidermidis (strain ATCC 35984 / DSM 28319 / BCRC 17069 / CCUG 31568 / BM 3577 / RP62A).